We begin with the raw amino-acid sequence, 145 residues long: MIALIQRVTRASVTVEDEVTGKIGPGLLVLLGVEKEDDEQKANRLCERVLGYRIFSDADGKMNLNVQQAGGSVLVVSQFTLAADTERGMRPSFSGGAAPDRAQALYEYFVERCRQQAINTQTGRFAADMQVELVNDGPVTFWLQV.

The short motif at 137-138 (GP) is the Gly-cisPro motif, important for rejection of L-amino acids element.

The protein belongs to the DTD family. Homodimer.

The protein resides in the cytoplasm. It carries out the reaction glycyl-tRNA(Ala) + H2O = tRNA(Ala) + glycine + H(+). The enzyme catalyses a D-aminoacyl-tRNA + H2O = a tRNA + a D-alpha-amino acid + H(+). An aminoacyl-tRNA editing enzyme that deacylates mischarged D-aminoacyl-tRNAs. Also deacylates mischarged glycyl-tRNA(Ala), protecting cells against glycine mischarging by AlaRS. Acts via tRNA-based rather than protein-based catalysis; rejects L-amino acids rather than detecting D-amino acids in the active site. By recycling D-aminoacyl-tRNA to D-amino acids and free tRNA molecules, this enzyme counteracts the toxicity associated with the formation of D-aminoacyl-tRNA entities in vivo and helps enforce protein L-homochirality. The chain is D-aminoacyl-tRNA deacylase from Salmonella typhimurium (strain LT2 / SGSC1412 / ATCC 700720).